The following is a 1410-amino-acid chain: DNA-directed RNA polymerase subunit beta' (1410 aa).

Zn(2+) contacts are provided by Cys-70, Cys-72, Cys-85, and Cys-88. Positions 460, 462, and 464 each coordinate Mg(2+). The Zn(2+) site is built by Cys-814, Cys-888, Cys-895, and Cys-898.

The protein belongs to the RNA polymerase beta' chain family. In terms of assembly, the RNAP catalytic core consists of 2 alpha, 1 beta, 1 beta' and 1 omega subunit. When a sigma factor is associated with the core the holoenzyme is formed, which can initiate transcription. Requires Mg(2+) as cofactor. It depends on Zn(2+) as a cofactor.

The catalysed reaction is RNA(n) + a ribonucleoside 5'-triphosphate = RNA(n+1) + diphosphate. Its function is as follows. DNA-dependent RNA polymerase catalyzes the transcription of DNA into RNA using the four ribonucleoside triphosphates as substrates. This chain is DNA-directed RNA polymerase subunit beta', found in Saccharophagus degradans (strain 2-40 / ATCC 43961 / DSM 17024).